The following is a 413-amino-acid chain: Sprouty-related, EVH1 domain-containing protein 2 (413 aa).

The 118-residue stretch at 5 to 122 folds into the WH1 domain; that stretch reads THPNDDSYIV…RGVRKALEDL (118 aa). Positions 122–163 are disordered; it reads LTEGSTTSSSTLQNEAELGDDDVFTTATDSSSNSSQKKDHST. One can recognise a KBD domain in the interval 195 to 248; the sequence is FSRNLFPFEDEEIVRINPRERWMITGYEDYRYAAVPDKFIQPEDSDSYVQISKN. In terms of domain architecture, SPR spans 303–411; the sequence is RCVYCRDMFN…CGCCGGKHKA (109 aa).

It is found in the cell membrane. It localises to the cytoplasmic vesicle. Its subcellular location is the secretory vesicle membrane. The protein localises to the cytoplasm. In terms of biological role, negatively regulates Ras signaling pathways and downstream activation of MAP kinases. The protein is Sprouty-related, EVH1 domain-containing protein 2 (spred2) of Danio rerio (Zebrafish).